We begin with the raw amino-acid sequence, 489 residues long: Trehalose-6-phosphate synthase (489 aa).

Residue Arg-22 participates in D-glucose 6-phosphate binding. 42–43 provides a ligand contact to UDP-alpha-D-glucose; the sequence is GG. D-glucose 6-phosphate-binding residues include Tyr-94 and Asp-148. 2 residues coordinate UDP-alpha-D-glucose: Arg-290 and Lys-295. Arg-328 is a binding site for D-glucose 6-phosphate. 393–397 lines the UDP-alpha-D-glucose pocket; it reads LVAKE.

This sequence belongs to the glycosyltransferase 20 family. As to quaternary structure, homotetramer.

It carries out the reaction ADP-alpha-D-glucose + D-glucose 6-phosphate = alpha,alpha-trehalose 6-phosphate + ADP + H(+). The catalysed reaction is CDP-alpha-D-glucose + D-glucose 6-phosphate = alpha,alpha-trehalose 6-phosphate + CDP + H(+). The enzyme catalyses GDP-alpha-D-glucose + D-glucose 6-phosphate = alpha,alpha-trehalose 6-phosphate + GDP + H(+). It catalyses the reaction TDP-alpha-D-glucose + D-glucose 6-phosphate = 5-methyl-UDP + alpha,alpha-trehalose 6-phosphate + H(+). It carries out the reaction D-glucose 6-phosphate + UDP-alpha-D-glucose = alpha,alpha-trehalose 6-phosphate + UDP + H(+). The protein operates within glycan biosynthesis; trehalose biosynthesis. Functionally, probably involved in the osmoprotection via the biosynthesis of trehalose and in the production of glycogen and alpha-glucan via the TreS-Pep2 branch involved in the biosynthesis of maltose-1-phosphate (M1P). Catalyzes the transfer of glucose from UDP-glucose (UDP-Glc) to D-glucose 6-phosphate (Glc-6-P) to form trehalose-6-phosphate. Probably also able to use ADP-Glc, CDP-Glc, GDP-Glc and TDP-Glc as glucosyl donors. The sequence is that of Trehalose-6-phosphate synthase from Mycobacterium sp. (strain KMS).